The chain runs to 114 residues: Cytochrome c2 (114 aa).

Gln-1 carries the pyrrolidone carboxylic acid modification. The heme c site is built by Cys-13, Cys-16, His-17, and Met-93.

The protein belongs to the cytochrome c family. Post-translationally, binds 1 heme c group covalently per subunit.

Its subcellular location is the periplasm. In terms of biological role, cytochrome c2 is found mainly in purple, non-sulfur, photosynthetic bacteria where it functions as the electron donor to the oxidized bacteriochlorophyll in the photophosphorylation pathway. However, it may also have a role in the respiratory chain and is found in some non-photosynthetic bacteria. This Rhodopseudomonas palustris protein is Cytochrome c2.